The sequence spans 379 residues: Gap junction alpha-1 protein (379 aa).

At 2–23 (GDWSALGRLLDKVQAYSTAGGK) the chain is on the cytoplasmic side. The chain crosses the membrane as a helical span at residues 24–44 (VWLSVLFIFRILLLGTAVESA). Topologically, residues 45 to 76 (WGDEQSAFVCNTQQPGCENVCYDKSFPISHVR) are extracellular. Intrachain disulfides connect C54–C192 and C187–C198. Residues 77 to 97 (FWVLQIIFVSTPTLLYLAHVF) traverse the membrane as a helical segment. At 98–163 (YLMRKEEKLN…TYIISILFKS (66 aa)) the chain is on the cytoplasmic side. Residues 164-184 (VFEVGFIIIQWYMYGFSLSAI) traverse the membrane as a helical segment. Topologically, residues 185–207 (YTCKRDPCPHQVDCFLSRPTEKT) are extracellular. A helical transmembrane segment spans residues 208 to 228 (IFIWFMLIVSIVSLALNIIEL). The Cytoplasmic portion of the chain corresponds to 229-379 (FYVTYKSIKD…SRPRPDDLEI (151 aa)). The disordered stretch occupies residues 322–379 (STISNTHAQPFDFSDEHQNTKKMAPGHEMQPLTILDQRPSSRASSHASSRPRPDDLEI). Residues 359 to 371 (RPSSRASSHASSR) show a composition bias toward low complexity.

This sequence belongs to the connexin family. Alpha-type (group II) subfamily. A connexon is composed of a hexamer of connexins. Interacts with TMEM65. As to expression, expressed in most tissues. Highest levels found in eye and brain.

The protein resides in the cell membrane. The protein localises to the cell junction. Its subcellular location is the gap junction. Functionally, one gap junction consists of a cluster of closely packed pairs of transmembrane channels, the connexons, through which materials of low MW diffuse from one cell to a neighboring cell. Plays an essential role in gap junction communication in the ventricles. The protein is Gap junction alpha-1 protein (gja1) of Xenopus laevis (African clawed frog).